The primary structure comprises 92 residues: Small ribosomal subunit protein bS20 (92 aa).

A disordered region spans residues 1-23; that stretch reads MANTTSAKKATRKIARRTDVNKA.

The protein belongs to the bacterial ribosomal protein bS20 family.

Functionally, binds directly to 16S ribosomal RNA. This Rhizobium leguminosarum bv. trifolii (strain WSM2304) protein is Small ribosomal subunit protein bS20.